The chain runs to 287 residues: ATP synthase gamma chain (287 aa).

The protein belongs to the ATPase gamma chain family. As to quaternary structure, F-type ATPases have 2 components, CF(1) - the catalytic core - and CF(0) - the membrane proton channel. CF(1) has five subunits: alpha(3), beta(3), gamma(1), delta(1), epsilon(1). CF(0) has three main subunits: a, b and c.

It localises to the cell inner membrane. Functionally, produces ATP from ADP in the presence of a proton gradient across the membrane. The gamma chain is believed to be important in regulating ATPase activity and the flow of protons through the CF(0) complex. This chain is ATP synthase gamma chain, found in Xanthomonas axonopodis pv. citri (strain 306).